A 675-amino-acid polypeptide reads, in one-letter code: Putative exonuclease GOR (675 aa).

Basic and acidic residues predominate over residues 66–79; that stretch reads VAKEAAPEASRHLG. Disordered stretches follow at residues 66 to 90 and 225 to 263; these read VAKE…APEG and AKRT…TATT. The segment at 358–483 is GOR1-125 epitope; the sequence is MPGLSRAALY…VRDGRKESLD (126 aa).

The protein belongs to the REXO1/REXO3 family.

It localises to the cytoplasm. The protein resides in the nucleus. The protein is Putative exonuclease GOR (REXO1L1P) of Homo sapiens (Human).